The sequence spans 346 residues: L-threonine dehydratase catabolic TdcB (346 aa).

59 to 60 (FT) contributes to the AMP binding site. N6-(pyridoxal phosphate)lysine is present on Lys-64. Residues Gln-94, 125–126 (GY), and Asn-321 contribute to the AMP site.

It belongs to the serine/threonine dehydratase family. As to quaternary structure, in the native structure, TdcB is in a dimeric form, whereas in the TdcB-AMP complex, it exists in a tetrameric form (dimer of dimers). Pyridoxal 5'-phosphate is required as a cofactor.

The catalysed reaction is L-threonine = 2-oxobutanoate + NH4(+). It participates in amino-acid degradation; L-threonine degradation via propanoate pathway; propanoate from L-threonine: step 1/4. Each protein molecule can bind up to four molecules of AMP, which act as an allosteric activator to the enzyme. Its function is as follows. Catalyzes the anaerobic formation of alpha-ketobutyrate and ammonia from threonine in a two-step reaction. The first step involved a dehydration of threonine and a production of enamine intermediates (aminocrotonate), which tautomerizes to its imine form (iminobutyrate). Both intermediates are unstable and short-lived. The second step is the nonenzymatic hydrolysis of the enamine/imine intermediates to form 2-ketobutyrate and free ammonia. In the low water environment of the cell, the second step is accelerated by RidA. This Staphylococcus aureus (strain bovine RF122 / ET3-1) protein is L-threonine dehydratase catabolic TdcB (tdcB).